The sequence spans 252 residues: Imidazole glycerol phosphate synthase subunit HisF (252 aa).

Residues D11 and D130 contribute to the active site.

This sequence belongs to the HisA/HisF family. Heterodimer of HisH and HisF.

It localises to the cytoplasm. It carries out the reaction 5-[(5-phospho-1-deoxy-D-ribulos-1-ylimino)methylamino]-1-(5-phospho-beta-D-ribosyl)imidazole-4-carboxamide + L-glutamine = D-erythro-1-(imidazol-4-yl)glycerol 3-phosphate + 5-amino-1-(5-phospho-beta-D-ribosyl)imidazole-4-carboxamide + L-glutamate + H(+). It functions in the pathway amino-acid biosynthesis; L-histidine biosynthesis; L-histidine from 5-phospho-alpha-D-ribose 1-diphosphate: step 5/9. In terms of biological role, IGPS catalyzes the conversion of PRFAR and glutamine to IGP, AICAR and glutamate. The HisF subunit catalyzes the cyclization activity that produces IGP and AICAR from PRFAR using the ammonia provided by the HisH subunit. This is Imidazole glycerol phosphate synthase subunit HisF from Bacillus licheniformis (strain ATCC 14580 / DSM 13 / JCM 2505 / CCUG 7422 / NBRC 12200 / NCIMB 9375 / NCTC 10341 / NRRL NRS-1264 / Gibson 46).